A 60-amino-acid chain; its full sequence is Large ribosomal subunit protein bL32 (60 aa).

The disordered stretch occupies residues 1 to 43 (MAVQQNRKTRSRRGMRRSHDALTGKTLSVDSTTGEKHLRHHVT). The span at 7 to 16 (RKTRSRRGMR) shows a compositional bias: basic residues.

Belongs to the bacterial ribosomal protein bL32 family.

The polypeptide is Large ribosomal subunit protein bL32 (Saccharophagus degradans (strain 2-40 / ATCC 43961 / DSM 17024)).